We begin with the raw amino-acid sequence, 860 residues long: Ras GTPase-activating-like protein gapA (860 aa).

Positions 1 to 20 are enriched in acidic residues; the sequence is MEGLEIEDEDVILLDEDDDS. Residues 1–48 form a disordered region; that stretch reads MEGLEIEDEDVILLDEDDDSSSSSTVNNSSSNIKNNGNTNNNIGNDDS. Low complexity predominate over residues 21 to 46; sequence SSSSTVNNSSSNIKNNGNTNNNIGND. Positions 146-185 form a coiled coil; that stretch reads AEIQELKRNMVAEIRRNHLLERDVNKLDKRIALLIKHRSN. A Ras-GAP domain is found at 269–515; that stretch reads FLILSLFRLA…SIVRQYLEDL (247 aa). The stretch at 663–732 forms a coiled coil; sequence NNPQLSSNAE…TIALRDLRKH (70 aa).

Heterotetramer. Quaternary complex with activated rac1A, ctxA and ctxB in the absence of rgaA.

Functionally, part of signaling pathway that is required for completion of cytokinesis. gapA and rgaA control cortexillin localization to the cleavage furrow and hence may be involved in cleavage of the midbody in the final stage of cytokinesis by regulating the actin cytoskeleton. Forms a complex by linking activated rac1A to ctxA in the absence of rgaA. Assembly of this complex is necessary for the recruitment of cortexillin to the midzone of the dividing cell. The sequence is that of Ras GTPase-activating-like protein gapA (gapA) from Dictyostelium discoideum (Social amoeba).